A 552-amino-acid polypeptide reads, in one-letter code: Glutamate--tRNA ligase (552 aa).

The 'HIGH' region signature appears at 102–112; it reads PNPSGPLHIGH.

It belongs to the class-I aminoacyl-tRNA synthetase family. Glutamate--tRNA ligase type 2 subfamily.

It localises to the cytoplasm. The catalysed reaction is tRNA(Glu) + L-glutamate + ATP = L-glutamyl-tRNA(Glu) + AMP + diphosphate. In terms of biological role, catalyzes the attachment of glutamate to tRNA(Glu) in a two-step reaction: glutamate is first activated by ATP to form Glu-AMP and then transferred to the acceptor end of tRNA(Glu). The protein is Glutamate--tRNA ligase of Methanothermobacter marburgensis (strain ATCC BAA-927 / DSM 2133 / JCM 14651 / NBRC 100331 / OCM 82 / Marburg) (Methanobacterium thermoautotrophicum).